Consider the following 413-residue polypeptide: Large ribosomal subunit protein uL4 (413 aa).

The residue at position 2 (A2) is an N-acetylalanine. K14 carries the post-translational modification N6-acetyllysine. R97 bears the Omega-N-methylarginine mark. Position 106 is an N6-acetyllysine (K106). K239 is covalently cross-linked (Glycyl lysine isopeptide (Lys-Gly) (interchain with G-Cter in SUMO2)). K259 carries the post-translational modification N6-acetyllysine. T266 bears the Phosphothreonine mark. S290 and S295 each carry phosphoserine. R300 is modified (citrulline). K327 participates in a covalent cross-link: Glycyl lysine isopeptide (Lys-Gly) (interchain with G-Cter in SUMO2). An N6-acetyllysine modification is found at K333. Positions 355–413 are disordered; it reads AAALAAKSDPKEAPAKKKPVVGKKKKPVVGRKAAAAKKPAADKKAADKRAGPEDKKPAA. K361 is subject to N6-acetyllysine; alternate. A Glycyl lysine isopeptide (Lys-Gly) (interchain with G-Cter in SUMO1); alternate cross-link involves residue K361. S362 is subject to Phosphoserine. Over residues 370 to 383 the composition is skewed to basic residues; that stretch reads KKKPVVGKKKKPVV. The span at 393–413 shows a compositional bias: basic and acidic residues; sequence PAADKKAADKRAGPEDKKPAA.

The protein belongs to the universal ribosomal protein uL4 family. In terms of assembly, component of the large ribosomal subunit. May bind IPO9 with low affinity. Interacts with RBM3. Post-translationally, citrullinated by PADI4.

Its subcellular location is the cytoplasm. Functionally, component of the large ribosomal subunit. The ribosome is a large ribonucleoprotein complex responsible for the synthesis of proteins in the cell. This chain is Large ribosomal subunit protein uL4 (RPL4), found in Oryctolagus cuniculus (Rabbit).